Reading from the N-terminus, the 237-residue chain is MLRKGVSFVGQAVQQTLKTQKNLRIQRFSATASQSSEEVNYEIRKDGKRLRGADYEEIVLTSIAGEDKTQIPKGAFDVLLKEYDDLQAESLDFKDKYQRSLAETENVRRRGIKQTDDAKVFAIQSFCKDLLEVSDILDIAVKSVKPEDLESGGKALKDLFEGVSMTRTVMAKTFAKHGLVTVDPTNEKFDPNLHEAVFQIPSANAKQPVGHIEVCTKIGYSLKERPIRPAQVGVVSK.

The protein belongs to the GrpE family. As to quaternary structure, probable component of the PAM complex at least composed of a mitochondrial HSP70 protein, GrpE, tim-44, tim-16 and tim-14/dnj-21.

It localises to the mitochondrion matrix. Essential component of the PAM complex, a complex required for the translocation of transit peptide-containing proteins from the inner membrane into the mitochondrial matrix in an ATP-dependent manner. Seems to control the nucleotide-dependent binding of mitochondrial HSP70 to substrate proteins. The polypeptide is GrpE protein homolog, mitochondrial (Caenorhabditis elegans).